The sequence spans 945 residues: Probable inorganic carbon transporter subunit DabA (945 aa).

Residues Cys408, Asp410, His651, and Cys666 each coordinate Zn(2+).

This sequence belongs to the inorganic carbon transporter (TC 9.A.2) DabA family. Forms a complex with DabB. Zn(2+) is required as a cofactor.

It localises to the cell inner membrane. Its function is as follows. Part of an energy-coupled inorganic carbon pump. This Sulfurihydrogenibium azorense (strain DSM 15241 / OCM 825 / Az-Fu1) protein is Probable inorganic carbon transporter subunit DabA.